The following is a 300-amino-acid chain: GTPase Era (300 aa).

One can recognise an Era-type G domain in the interval 8-176 (RCGYVAIVGR…ESLIASHLPE (169 aa)). A G1 region spans residues 16–23 (GRPNVGKS). Residue 16–23 (GRPNVGKS) coordinates GTP. Residues 42 to 46 (QTTRH) are G2. Residues 63-66 (DTPG) are G3. Residues 63-67 (DTPGM) and 125-128 (NKTD) each bind GTP. Residues 125-128 (NKTD) are G4. The G5 stretch occupies residues 155–157 (ISA). One can recognise a KH type-2 domain in the interval 199–283 (VREKIMRQLG…MLNLWVKVKG (85 aa)).

This sequence belongs to the TRAFAC class TrmE-Era-EngA-EngB-Septin-like GTPase superfamily. Era GTPase family. In terms of assembly, monomer.

It is found in the cytoplasm. The protein localises to the cell inner membrane. Functionally, an essential GTPase that binds both GDP and GTP, with rapid nucleotide exchange. Plays a role in 16S rRNA processing and 30S ribosomal subunit biogenesis and possibly also in cell cycle regulation and energy metabolism. The polypeptide is GTPase Era (Pseudomonas savastanoi pv. phaseolicola (strain 1448A / Race 6) (Pseudomonas syringae pv. phaseolicola (strain 1448A / Race 6))).